A 279-amino-acid polypeptide reads, in one-letter code: Ribosomal RNA small subunit methyltransferase A (279 aa).

Histidine 12, leucine 14, glycine 39, glutamate 60, aspartate 81, and asparagine 118 together coordinate S-adenosyl-L-methionine.

Belongs to the class I-like SAM-binding methyltransferase superfamily. rRNA adenine N(6)-methyltransferase family. RsmA subfamily.

It localises to the cytoplasm. It carries out the reaction adenosine(1518)/adenosine(1519) in 16S rRNA + 4 S-adenosyl-L-methionine = N(6)-dimethyladenosine(1518)/N(6)-dimethyladenosine(1519) in 16S rRNA + 4 S-adenosyl-L-homocysteine + 4 H(+). Functionally, specifically dimethylates two adjacent adenosines (A1518 and A1519) in the loop of a conserved hairpin near the 3'-end of 16S rRNA in the 30S particle. May play a critical role in biogenesis of 30S subunits. The chain is Ribosomal RNA small subunit methyltransferase A from Polaromonas naphthalenivorans (strain CJ2).